We begin with the raw amino-acid sequence, 32 residues long: Photosystem I reaction center subunit XII (32 aa).

Residues 9–28 traverse the membrane as a helical segment; it reads VYIALVVALIPGLLAWRLAT.

Belongs to the PsaM family.

It localises to the cellular thylakoid membrane. The sequence is that of Photosystem I reaction center subunit XII from Nostoc sp. (strain PCC 7120 / SAG 25.82 / UTEX 2576).